Consider the following 312-residue polypeptide: Sulfate adenylyltransferase subunit 2 (312 aa).

The protein belongs to the PAPS reductase family. CysD subfamily. In terms of assembly, heterodimer composed of CysD, the smaller subunit, and CysN.

It carries out the reaction sulfate + ATP + H(+) = adenosine 5'-phosphosulfate + diphosphate. It participates in sulfur metabolism; hydrogen sulfide biosynthesis; sulfite from sulfate: step 1/3. In terms of biological role, with CysN forms the ATP sulfurylase (ATPS) that catalyzes the adenylation of sulfate producing adenosine 5'-phosphosulfate (APS) and diphosphate, the first enzymatic step in sulfur assimilation pathway. APS synthesis involves the formation of a high-energy phosphoric-sulfuric acid anhydride bond driven by GTP hydrolysis by CysN coupled to ATP hydrolysis by CysD. This is Sulfate adenylyltransferase subunit 2 from Methylobacterium nodulans (strain LMG 21967 / CNCM I-2342 / ORS 2060).